The primary structure comprises 1400 residues: DNA-directed RNA polymerase subunit beta' (1400 aa).

Zn(2+) is bound by residues Cys71, Cys73, Cys86, and Cys89. 3 residues coordinate Mg(2+): Asp462, Asp464, and Asp466. Cys811, Cys885, Cys892, and Cys895 together coordinate Zn(2+).

This sequence belongs to the RNA polymerase beta' chain family. The RNAP catalytic core consists of 2 alpha, 1 beta, 1 beta' and 1 omega subunit. When a sigma factor is associated with the core the holoenzyme is formed, which can initiate transcription. Mg(2+) serves as cofactor. The cofactor is Zn(2+).

The catalysed reaction is RNA(n) + a ribonucleoside 5'-triphosphate = RNA(n+1) + diphosphate. In terms of biological role, DNA-dependent RNA polymerase catalyzes the transcription of DNA into RNA using the four ribonucleoside triphosphates as substrates. The sequence is that of DNA-directed RNA polymerase subunit beta' from Brucella melitensis biotype 1 (strain ATCC 23456 / CCUG 17765 / NCTC 10094 / 16M).